The primary structure comprises 1497 residues: ABC multidrug transporter C (1497 aa).

Residues 1–13 (MSLLGTINPNINP) are compositionally biased toward polar residues. The interval 1 to 21 (MSLLGTINPNINPERTVAGRG) is disordered. 2 N-linked (GlcNAc...) asparagine glycosylation sites follow: asparagine 137 and asparagine 336. Residues 158–412 (LEVGTLVRRI…FTNMGFECPE (255 aa)) form the ABC transporter 1 domain. Helical transmembrane passes span 523-543 (LTMSQLIGNFIMALVIGSVFY), 557-577 (ALLFFAVLLNAFSSALEILTL), 599-621 (AIASMLCDMPYKITNAIIFNLTL), 632-652 (GAFFVFLLFSFVTTLTMSMLF), and 665-685 (ALVPAAILILGLVIYTGFTIP). Asparagine 762 is a glycosylation site (N-linked (GlcNAc...) asparagine). The chain crosses the membrane as a helical span at residues 777-797 (GIMFGFMFFFMFTYLTATEYI). A disordered region spans residues 815 to 843 (QPTGSHDVEKSPEVSSAAKTDEASSKEAT). The ABC transporter 2 domain maps to 853–1096 (FQWKDVCYDI…LASYFERNGA (244 aa)). 889-896 (GVSGAGKT) serves as a coordination point for ATP. The next 5 membrane-spanning stretches (helical) occupy residues 1192-1212 (YIYSKTALCVLTALYIGFSFF), 1226-1246 (FSIFMLMTIFGNLVQQIMPNF), 1273-1293 (IIVELPWNTLMAFLIFVCWYY), 1313-1333 (LMFLLIWSFLLFTSTFAHMMI), and 1352-1372 (LCLIFCGVLAPPQSLPGFWIF). Asparagine 1411 carries an N-linked (GlcNAc...) asparagine glycan. Residues 1464–1484 (FGIMWAYIIFNIFAAVFIYWL) traverse the membrane as a helical segment.

It belongs to the ABC transporter superfamily. ABCG family. PDR (TC 3.A.1.205) subfamily.

Its subcellular location is the cell membrane. It catalyses the reaction fluconazole(in) + ATP + H2O = fluconazole(out) + ADP + phosphate + H(+). The catalysed reaction is itraconazole(in) + ATP + H2O = itraconazole(out) + ADP + phosphate + H(+). It carries out the reaction voriconazole(in) + ATP + H2O = voriconazole(out) + ADP + phosphate + H(+). The efflux inhibitor FK506 impairs the transport activity. Pleiotropic ABC efflux transporter that shows a strong substrate specificity for the azole class of drugs such as lotrimazole (CLT), fluconazole (FLC), itraconazole (ITC), ketoconazole (KTC), posaconazole (POS), tebuconazole (TEBZ), and voriconazole (VRC). Is also able to transport rhodamine 6G (R-6G), a known substrate for many ABC transporters. Required for normal pathogenesis in a Galleria mellonella (greater wax moth) infection model. This Aspergillus fumigatus (strain ATCC MYA-4609 / CBS 101355 / FGSC A1100 / Af293) (Neosartorya fumigata) protein is ABC multidrug transporter C.